The following is a 167-amino-acid chain: Ubiquitin-fold modifier-conjugating enzyme 1 (167 aa).

C116 (glycyl thioester intermediate) is an active-site residue. K122 participates in a covalent cross-link: Glycyl lysine isopeptide (Lys-Gly) (interchain with G-Cter in UFM1).

This sequence belongs to the ubiquitin-conjugating enzyme family. UFC1 subfamily. Interacts with UBA5 (via C-terminus). Interacts with UFL1. Interacts with UFM1. Interacts with KIRREL3. Post-translationally, ufmylated at Lys-122. Deufmylated by UFSP1.

Functionally, E2-like enzyme which specifically catalyzes the second step in ufmylation. Accepts the ubiquitin-like modifier UFM1 from the E1 enzyme UBA5 and forms an intermediate with UFM1 via a thioester linkage. Ufmylation is involved in various processes, such as ribosome recycling, response to DNA damage, interferon response or reticulophagy (also called ER-phagy). The sequence is that of Ubiquitin-fold modifier-conjugating enzyme 1 from Bos taurus (Bovine).